The sequence spans 440 residues: Enolase 1 (440 aa).

Substrate is bound by residues His161 and Glu170. Residue Glu213 is the Proton donor of the active site. Residues Asp248, Glu297, and Asp324 each coordinate Mg(2+). Substrate-binding residues include Glu297 and Asp324. Lys349 serves as the catalytic Proton acceptor. Substrate-binding positions include 376-379 (SHRS) and Lys400.

The protein belongs to the enolase family. Homodimer. Requires Mg(2+) as cofactor.

The protein resides in the cytoplasm. It catalyses the reaction (2R)-2-phosphoglycerate = phosphoenolpyruvate + H2O. It participates in carbohydrate degradation; glycolysis; pyruvate from D-glyceraldehyde 3-phosphate: step 4/5. The protein is Enolase 1 (ENO1) of Candida albicans (strain SC5314 / ATCC MYA-2876) (Yeast).